Reading from the N-terminus, the 945-residue chain is MSELSRFFIEIAERWQKRWKESRVFEPEPTPGVAKYFITAAYPYPNGAVHIGHGRTYLIADVLARFYRHMGRVVLYPMGFHYTGTPILTIAEVIAAGDKTVIEEYMEIYGVPEEEIKKMGDPLYLARYFHNRSKMAMERFGLSIDWTREFTTIDPEYQRFIQWQFEKLRKKGLIVRGRHPVGWCPRHSMPVGAHDTKDDKEPEIGQWTLIYFTDSEGLTFPAATLRPETVPGVTNLWINPDAEYVVAEFDGKRVVISRDAAYRLSFQAEVKILREARGREFVGRSVQNPVTGEWVPIYEAWFVDPRVGTGVVMSVPAHAPYDYVALRDLGIEKLIPLIKVEGYGDYPAKEVVERMGIKSQTDPALEEATKEVYSTEYTRGVMREDVTERIGIHLQEPARSMLRAVFKMYFAGRPVREAREFIAKWLVEARLGGVMYDIMNKPVYCRCGTEIVVKVLEDQWFINYGDPKWKETARKLVDEMVIIPGEAKAHFFATIDWLDKRACARTRGLGTPLPWSSGWIIESLSDSTIYMAFYTVIKKIRQFGIRPEQLTEEFWDFVFLGQGSADEVSKKTGVPVEALKAIREEFEYWYPLDSRNSGKDLIPNHLTFFIFNHVAIFPREKWPRQIVANGWVLREGEKMSKSKRNVLPLDRAVEMYGPDPLRATLALAAEVEQDLDFRDAEARRNAQQLMAIYTLVQRLIQNAENRPAGWIDQWLIAEISRILDKAREAYEKVRVRQAAVEVIYNAKAVFDQYLAMVEKPTKLALEAARAWVVAMEPIVPHIAEELWALLGGSGFVATAPWPRLKAESAALLAKRYVDMLIEDVKNIPAFGPGARRIVIYVNRNFSWAKAALNGDVKTVVTAGAPPQVAKRLIDLVKTLGDEVRTLLASTEQFDELETLKSYKAYIERTLGTPIEIYSVDDPSAPDLGGKKRAALPLKPGIYIER.

The short motif at 43–53 (PYPNGAVHIGH) is the 'HIGH' region element. A 'KMSKS' region motif is present at residues 638 to 642 (KMSKS). Residue Lys641 coordinates ATP.

This sequence belongs to the class-I aminoacyl-tRNA synthetase family.

It localises to the cytoplasm. The catalysed reaction is tRNA(Leu) + L-leucine + ATP = L-leucyl-tRNA(Leu) + AMP + diphosphate. The polypeptide is Leucine--tRNA ligase (Pyrobaculum islandicum (strain DSM 4184 / JCM 9189 / GEO3)).